A 416-amino-acid polypeptide reads, in one-letter code: Serine hydroxymethyltransferase 1 (416 aa).

(6S)-5,6,7,8-tetrahydrofolate is bound by residues Leu-121 and 125 to 127 (GHL). An N6-(pyridoxal phosphate)lysine modification is found at Lys-229. (6S)-5,6,7,8-tetrahydrofolate contacts are provided by residues Glu-245 and 354–356 (SPF).

The protein belongs to the SHMT family. In terms of assembly, homodimer. It depends on pyridoxal 5'-phosphate as a cofactor.

The protein localises to the cytoplasm. The enzyme catalyses (6R)-5,10-methylene-5,6,7,8-tetrahydrofolate + glycine + H2O = (6S)-5,6,7,8-tetrahydrofolate + L-serine. It participates in one-carbon metabolism; tetrahydrofolate interconversion. Its pathway is amino-acid biosynthesis; glycine biosynthesis; glycine from L-serine: step 1/1. In terms of biological role, catalyzes the reversible interconversion of serine and glycine with tetrahydrofolate (THF) serving as the one-carbon carrier. This reaction serves as the major source of one-carbon groups required for the biosynthesis of purines, thymidylate, methionine, and other important biomolecules. Also exhibits THF-independent aldolase activity toward beta-hydroxyamino acids, producing glycine and aldehydes, via a retro-aldol mechanism. The polypeptide is Serine hydroxymethyltransferase 1 (Vibrio vulnificus (strain CMCP6)).